A 126-amino-acid polypeptide reads, in one-letter code: Large ribosomal subunit protein bL17 (126 aa).

Belongs to the bacterial ribosomal protein bL17 family. As to quaternary structure, part of the 50S ribosomal subunit. Contacts protein L32.

The chain is Large ribosomal subunit protein bL17 from Limosilactobacillus fermentum (strain NBRC 3956 / LMG 18251) (Lactobacillus fermentum).